The following is a 425-amino-acid chain: Pleckstrin homology domain-containing family A member 2 (425 aa).

Residues 7 to 113 enclose the PH 1 domain; that stretch reads QNRICGFLDI…WVEALNQASK (107 aa). Residue Lys-141 forms a Glycyl lysine isopeptide (Lys-Gly) (interchain with G-Cter in SUMO2) linkage. Residue Ser-184 is modified to Phosphoserine. Residues 198-298 form the PH 2 domain; it reads PLIKSGYCVK…WIEGIGAAVQ (101 aa). A compositionally biased stretch (polar residues) spans 310–331; sequence SRSISLTRPGSSTLTSAPNSIL. The interval 310-425 is disordered; that stretch reads SRSISLTRPG…DDENIRTSDV (116 aa). Ser-314 and Ser-349 each carry phosphoserine. Basic and acidic residues-rich tracts occupy residues 363–375 and 400–410; these read AEEK…HAPE and RSEPQHPKEKP.

As to quaternary structure, binds MPDZ and PTPN13.

The protein localises to the cytoplasm. It localises to the cell membrane. It is found in the nucleus. Its function is as follows. Binds specifically to phosphatidylinositol 3,4-diphosphate (PtdIns3,4P2), but not to other phosphoinositides. May recruit other proteins to the plasma membrane. This is Pleckstrin homology domain-containing family A member 2 (Plekha2) from Mus musculus (Mouse).